A 310-amino-acid chain; its full sequence is ADP-L-glycero-D-manno-heptose-6-epimerase (310 aa).

NADP(+) is bound by residues 10–11 (FI), 31–32 (DN), K38, K53, 75–79 (EGACS), and N92. Y140 (proton acceptor) is an active-site residue. NADP(+) is bound at residue K144. N169 serves as a coordination point for substrate. Residues V170 and K178 each contribute to the NADP(+) site. The active-site Proton acceptor is K178. Residues S180, H187, 201-204 (FEGS), R209, and Y272 each bind substrate.

This sequence belongs to the NAD(P)-dependent epimerase/dehydratase family. HldD subfamily. Homopentamer. It depends on NADP(+) as a cofactor.

It carries out the reaction ADP-D-glycero-beta-D-manno-heptose = ADP-L-glycero-beta-D-manno-heptose. It participates in nucleotide-sugar biosynthesis; ADP-L-glycero-beta-D-manno-heptose biosynthesis; ADP-L-glycero-beta-D-manno-heptose from D-glycero-beta-D-manno-heptose 7-phosphate: step 4/4. It functions in the pathway bacterial outer membrane biogenesis; LPS core biosynthesis. Its function is as follows. Catalyzes the interconversion between ADP-D-glycero-beta-D-manno-heptose and ADP-L-glycero-beta-D-manno-heptose via an epimerization at carbon 6 of the heptose. This is ADP-L-glycero-D-manno-heptose-6-epimerase from Klebsiella pneumoniae.